The chain runs to 885 residues: Envelope glycoprotein B (885 aa).

The first 34 residues, 1 to 34 (MRPRGTPPSFLPLPVLLALAVIAAAGRAAPAAAA), serve as a signal peptide directing secretion. Over residues 29-46 (APAAAAAPTADPAATPAL) the composition is skewed to low complexity. Positions 29 to 74 (APAAAAAPTADPAATPALPEDEEVPDEDGEGVATPAPAANASVEAG) are disordered. At 35–759 (APTADPAATP…SGVSSFLSNP (725 aa)) the chain is on the virion surface side. Over residues 47–58 (PEDEEVPDEDGE) the composition is skewed to acidic residues. N-linked (GlcNAc...) asparagine; by host glycosylation is found at Asn-68 and Asn-122. Cystine bridges form between Cys-97–Cys-558, Cys-114–Cys-514, Cys-188–Cys-252, Cys-345–Cys-393, and Cys-581–Cys-618. Involved in fusion and/or binding to host membrane regions lie at residues 154–160 (VWFGHRY) and 239–246 (RVEAFHRY). Residues Asn-379 and Asn-411 are each glycosylated (N-linked (GlcNAc...) asparagine; by host). Residues 455 to 478 (RRPAGGDPGEAATPGPSVDPPSVE) are disordered. N-linked (GlcNAc...) asparagine; by host glycosylation is present at Asn-659. 2 hydrophobic membrane proximal region regions span residues 704–757 (IDTV…SFLS) and 716–756 (LFAG…SSFL). Residues 760 to 780 (FGALAVGLLVLAGLAAAFFAF) traverse the membrane as a helical segment. Topologically, residues 781–885 (RYVMRLQRNP…PLRDTDEEEL (105 aa)) are intravirion. The short motif at 834-837 (YMAL) is the Golgi targeting element. The tract at residues 866–885 (MRKRARPRYSPLRDTDEEEL) is disordered. The short motif at 874–877 (YSPL) is the Internalization motif element.

This sequence belongs to the herpesviridae glycoprotein B family. As to quaternary structure, homotrimer; disulfide-linked. Binds to heparan sulfate proteoglycans. Interacts with gH/gL heterodimer.

The protein resides in the virion membrane. The protein localises to the host cell membrane. Its subcellular location is the host endosome membrane. It localises to the host Golgi apparatus membrane. Its function is as follows. Envelope glycoprotein that forms spikes at the surface of virion envelope. Essential for the initial attachment to heparan sulfate moieties of the host cell surface proteoglycans. Involved in fusion of viral and cellular membranes leading to virus entry into the host cell. Following initial binding to its host receptors, membrane fusion is mediated by the fusion machinery composed at least of gB and the heterodimer gH/gL. May be involved in the fusion between the virion envelope and the outer nuclear membrane during virion egress. In Herpes simplex virus type 2 (strain SA8) (Simian agent 8), this protein is Envelope glycoprotein B.